A 190-amino-acid chain; its full sequence is R46 site-specific recombinase (190 aa).

A Resolvase/invertase-type recombinase catalytic domain is found at 2 to 137 (RLFGYARVST…EGRQEAKLKG (136 aa)). The O-(5'-phospho-DNA)-serine intermediate role is filled by Ser-10. A DNA-binding region (H-T-H motif) is located at residues 161-180 (ATDIARRLSIARSTVYKILE).

It belongs to the site-specific recombinase resolvase family.

In terms of biological role, site-specific recombination protein. This Escherichia coli protein is R46 site-specific recombinase (tnpR).